Here is a 63-residue protein sequence, read N- to C-terminus: uncharacterized protein (63 aa).

Residues 3–23 form a helical membrane-spanning segment; the sequence is IIYIILGFLSLAIGIIGIFPS.

The protein resides in the membrane. This is an uncharacterized protein from Haemophilus influenzae (strain ATCC 51907 / DSM 11121 / KW20 / Rd).